Consider the following 61-residue polypeptide: Large ribosomal subunit protein uL29 (61 aa).

This sequence belongs to the universal ribosomal protein uL29 family.

In Stenotrophomonas maltophilia (strain K279a), this protein is Large ribosomal subunit protein uL29.